The following is a 122-amino-acid chain: Small ribosomal subunit protein uS13 (122 aa).

Residues R93–K122 are disordered. Over residues A107–T116 the composition is skewed to basic residues.

This sequence belongs to the universal ribosomal protein uS13 family. In terms of assembly, part of the 30S ribosomal subunit. Forms a loose heterodimer with protein S19. Forms two bridges to the 50S subunit in the 70S ribosome.

Functionally, located at the top of the head of the 30S subunit, it contacts several helices of the 16S rRNA. In the 70S ribosome it contacts the 23S rRNA (bridge B1a) and protein L5 of the 50S subunit (bridge B1b), connecting the 2 subunits; these bridges are implicated in subunit movement. Contacts the tRNAs in the A and P-sites. The polypeptide is Small ribosomal subunit protein uS13 (Wolinella succinogenes (strain ATCC 29543 / DSM 1740 / CCUG 13145 / JCM 31913 / LMG 7466 / NCTC 11488 / FDC 602W) (Vibrio succinogenes)).